We begin with the raw amino-acid sequence, 290 residues long: Nucleoid occlusion protein (290 aa).

Positions 153-172 (EALAQRLGKGQSTIANKLRL) form a DNA-binding region, H-T-H motif.

The protein belongs to the ParB family.

The protein resides in the cytoplasm. Its subcellular location is the nucleoid. Its function is as follows. Effects nucleoid occlusion by binding relatively nonspecifically to DNA and preventing the assembly of the division machinery in the vicinity of the nucleoid, especially under conditions that disturb the cell cycle. It helps to coordinate cell division and chromosome segregation by preventing the formation of the Z ring through the nucleoid, which would cause chromosome breakage. The chain is Nucleoid occlusion protein from Bacillus cereus (strain ATCC 10987 / NRS 248).